A 343-amino-acid polypeptide reads, in one-letter code: MPIICKSKCGNRAALKRPKTGDALCKECFFAAFEAEIHHTISSSNLFRRGEKVAVAASGGKDSTVLAHVLKLLNERHNYGLELVLLSIDEGITGYRDDSLETVKQNRDDYQMPLKILSYEELYGWTMDRIVAQIGRSNNCTFCGVFRRQALDRGAKLLGVDSIATGHNADDIAETVLMNVLRGDTARLRRCTSIRTGGGEDSIPRVKPLKYSYEKEIVMYAHYKKLVYFSTECVFAPNAYRGHARAFLKDLEKVRPSVIMDIIYSGEQLRFKDTVKKPERGTCTRCGFVSSQQPCKACVLLEGLNRGLPKLGIGKKTKGERMIAKQNQELALRERANLVKNDF.

This sequence belongs to the TtcA family. CTU1/NCS6/ATPBD3 subfamily.

The protein resides in the cytoplasm. It participates in tRNA modification; 5-methoxycarbonylmethyl-2-thiouridine-tRNA biosynthesis. Its function is as follows. Plays a central role in 2-thiolation of mcm(5)S(2)U at tRNA wobble positions of tRNA(Lys), tRNA(Glu) and tRNA(Gln). Directly binds tRNAs and probably acts by catalyzing adenylation of tRNAs, an intermediate required for 2-thiolation. It is unclear whether it acts as a sulfurtransferase that transfers sulfur from thiocarboxylated URM1 onto the uridine of tRNAs at wobble position. The protein is Cytoplasmic tRNA 2-thiolation protein 1 of Drosophila sechellia (Fruit fly).